Reading from the N-terminus, the 333-residue chain is MAELFYDADADLSIIQGRKVAVIGYGSQGHAHALSLRDSGVDVRVGLHEGSKSKAKAEEQGLRVVTPSEAAAEADVIMILVPDPIQAQVYEESIKDNLKDGDALFFGHGLNIRFGFIKPPAGVDVCMVAPKGPGHLVRRQYEEGRGVPCIAAVEQDATGNGFALALSYAKGIGGTRAGVIKTTFTEETETDLFGEQAVLCGGTAALVKAGFETLTEAGYQPEIAYFECLHELKLIVDLMYEGGLEKMRWSISETAEWGDYVTGPRIITDATKAEMKKVLAEIQDGTFAQAWMDEYHGGLKKYNEYKTQDENHLLETTGKELRKLMSWVNDEEA.

One can recognise a KARI N-terminal Rossmann domain in the interval 2–182 (AELFYDADAD…GGTRAGVIKT (181 aa)). NADP(+) contacts are provided by residues 25–28 (YGSQ), S51, S53, and 83–86 (DPIQ). H108 is a catalytic residue. Residue G134 coordinates NADP(+). A KARI C-terminal knotted domain is found at 183–328 (TFTEETETDL…KELRKLMSWV (146 aa)). Mg(2+)-binding residues include D191, E195, E227, and E231. S252 is a binding site for substrate.

This sequence belongs to the ketol-acid reductoisomerase family. Requires Mg(2+) as cofactor.

The catalysed reaction is (2R)-2,3-dihydroxy-3-methylbutanoate + NADP(+) = (2S)-2-acetolactate + NADPH + H(+). The enzyme catalyses (2R,3R)-2,3-dihydroxy-3-methylpentanoate + NADP(+) = (S)-2-ethyl-2-hydroxy-3-oxobutanoate + NADPH + H(+). The protein operates within amino-acid biosynthesis; L-isoleucine biosynthesis; L-isoleucine from 2-oxobutanoate: step 2/4. It participates in amino-acid biosynthesis; L-valine biosynthesis; L-valine from pyruvate: step 2/4. Its function is as follows. Involved in the biosynthesis of branched-chain amino acids (BCAA). Catalyzes an alkyl-migration followed by a ketol-acid reduction of (S)-2-acetolactate (S2AL) to yield (R)-2,3-dihydroxy-isovalerate. In the isomerase reaction, S2AL is rearranged via a Mg-dependent methyl migration to produce 3-hydroxy-3-methyl-2-ketobutyrate (HMKB). In the reductase reaction, this 2-ketoacid undergoes a metal-dependent reduction by NADPH to yield (R)-2,3-dihydroxy-isovalerate. The polypeptide is Ketol-acid reductoisomerase (NADP(+)) (Streptomyces avermitilis (strain ATCC 31267 / DSM 46492 / JCM 5070 / NBRC 14893 / NCIMB 12804 / NRRL 8165 / MA-4680)).